The primary structure comprises 167 residues: Large ribosomal subunit protein uL10 (167 aa).

The protein belongs to the universal ribosomal protein uL10 family. In terms of assembly, part of the ribosomal stalk of the 50S ribosomal subunit. The N-terminus interacts with L11 and the large rRNA to form the base of the stalk. The C-terminus forms an elongated spine to which L12 dimers bind in a sequential fashion forming a multimeric L10(L12)X complex.

Its function is as follows. Forms part of the ribosomal stalk, playing a central role in the interaction of the ribosome with GTP-bound translation factors. This is Large ribosomal subunit protein uL10 from Latilactobacillus sakei subsp. sakei (strain 23K) (Lactobacillus sakei subsp. sakei).